Reading from the N-terminus, the 258-residue chain is Acyl-[acyl-carrier-protein]--UDP-N-acetylglucosamine O-acyltransferase (258 aa).

It belongs to the transferase hexapeptide repeat family. LpxA subfamily. In terms of assembly, homotrimer.

The protein resides in the cytoplasm. The catalysed reaction is a (3R)-hydroxyacyl-[ACP] + UDP-N-acetyl-alpha-D-glucosamine = a UDP-3-O-[(3R)-3-hydroxyacyl]-N-acetyl-alpha-D-glucosamine + holo-[ACP]. The protein operates within glycolipid biosynthesis; lipid IV(A) biosynthesis; lipid IV(A) from (3R)-3-hydroxytetradecanoyl-[acyl-carrier-protein] and UDP-N-acetyl-alpha-D-glucosamine: step 1/6. Involved in the biosynthesis of lipid A, a phosphorylated glycolipid that anchors the lipopolysaccharide to the outer membrane of the cell. The polypeptide is Acyl-[acyl-carrier-protein]--UDP-N-acetylglucosamine O-acyltransferase (Pseudomonas fluorescens (strain Pf0-1)).